The chain runs to 258 residues: Aspartate/glutamate leucyltransferase (258 aa).

The protein belongs to the R-transferase family. Bpt subfamily.

It is found in the cytoplasm. It catalyses the reaction N-terminal L-glutamyl-[protein] + L-leucyl-tRNA(Leu) = N-terminal L-leucyl-L-glutamyl-[protein] + tRNA(Leu) + H(+). The enzyme catalyses N-terminal L-aspartyl-[protein] + L-leucyl-tRNA(Leu) = N-terminal L-leucyl-L-aspartyl-[protein] + tRNA(Leu) + H(+). Functionally, functions in the N-end rule pathway of protein degradation where it conjugates Leu from its aminoacyl-tRNA to the N-termini of proteins containing an N-terminal aspartate or glutamate. In Bradyrhizobium diazoefficiens (strain JCM 10833 / BCRC 13528 / IAM 13628 / NBRC 14792 / USDA 110), this protein is Aspartate/glutamate leucyltransferase.